A 381-amino-acid polypeptide reads, in one-letter code: Creatine kinase M-type (381 aa).

One can recognise a Phosphagen kinase N-terminal domain in the interval 11–98 (KLNYSAAEEF…FDPVIEDRHG (88 aa)). Positions 125–367 (YVLSSRVRTG…KLMVEMEKRL (243 aa)) constitute a Phosphagen kinase C-terminal domain. ATP-binding positions include 128–132 (SSRVR), His191, Arg236, Arg292, 320–325 (RGTGGV), and Asp335.

Belongs to the ATP:guanido phosphotransferase family. Dimer of identical or non-identical chains. With MM being the major form in skeletal muscle and myocardium, MB existing in myocardium, and BB existing in many tissues, especially brain.

It is found in the cytoplasm. It carries out the reaction creatine + ATP = N-phosphocreatine + ADP + H(+). Its function is as follows. Reversibly catalyzes the transfer of phosphate between ATP and various phosphogens (e.g. creatine phosphate). Creatine kinase isoenzymes play a central role in energy transduction in tissues with large, fluctuating energy demands, such as skeletal muscle, heart, brain and spermatozoa. In Tetronarce californica (Pacific electric ray), this protein is Creatine kinase M-type.